A 486-amino-acid chain; its full sequence is Adenylate kinase 8 (486 aa).

Adenylate kinase stretches follow at residues 58-258 and 269-471; these read PRII…NFIC and PRIL…SRLV. 67-72 is a binding site for ATP; the sequence is ASGKKT. The segment at 87–112 is NMP 1; that stretch reads TFCDILKDDSDLTRAAQSYYDKKQNV. Residues 139–142 and arginine 202 each bind AMP; that span reads AIPK. Residues 176-205 are LID 1; that stretch reads GKRIDPVTGDVYHVTFMWPESEEVAQRLET. Residue 278 to 283 coordinates ATP; that stretch reads GAGRNL. Residues 298–327 form an NMP 2 region; the sequence is CCGELLKAVSADESHMGELIKPYLESEQQV. Residues 325 to 327 and 354 to 357 each bind AMP; these read QQV and GFPR. The tract at residues 391–424 is LID 2; that stretch reads LRAVDPVTGEWYHSVYKPPPGPEVQARLRFNPQH. An ATP-binding site is contributed by arginine 392. Arginine 432 is an AMP binding site.

This sequence belongs to the adenylate kinase family.

The protein resides in the cytoplasm. It is found in the cytosol. The enzyme catalyses AMP + ATP = 2 ADP. The catalysed reaction is a 2'-deoxyribonucleoside 5'-diphosphate + ATP = a 2'-deoxyribonucleoside 5'-triphosphate + ADP. It carries out the reaction a ribonucleoside 5'-diphosphate + ATP = a ribonucleoside 5'-triphosphate + ADP. Its function is as follows. Nucleoside monophosphate (NMP) kinase that catalyzes the reversible transfer of the terminal phosphate group between nucleoside triphosphates and monophosphates. Has highest activity toward AMP, and weaker activity toward dAMP, CMP and dCMP. Also displays broad nucleoside diphosphate kinase activity. The polypeptide is Adenylate kinase 8 (ak8) (Danio rerio (Zebrafish)).